The primary structure comprises 327 residues: Interleukin-12 subunit beta (327 aa).

The N-terminal stretch at 1–22 (MHPQQLVVSWFSLVLLASPIVA) is a signal peptide. The Ig-like C2-type domain occupies 23–106 (IWELEKNVYV…LSRSLLLLHK (84 aa)). Residues Cys50 and Cys90 are joined by a disulfide bond. An N-linked (GlcNAc...) asparagine glycan is attached at Asn223. Positions 238–327 (PPKNLQLRPL…WSEWASVSCS (90 aa)) constitute a Fibronectin type-III domain.

Belongs to the IL-12B family. In terms of assembly, heterodimer with IL12A; disulfide-linked. The heterodimer is known as interleukin IL-12. Heterodimer with IL23A; disulfide-linked. The heterodimer is known as interleukin IL-23. Also secreted as a monomer. Interacts with NBR1; this interaction promotes IL-12 secretion.

The protein localises to the secreted. Functionally, cytokine that can act as a growth factor for activated T and NK cells, enhance the lytic activity of NK/lymphokine-activated killer cells, and stimulate the production of IFN-gamma by resting PBMC. Its function is as follows. Associates with IL23A to form the IL-23 interleukin, a heterodimeric cytokine which functions in innate and adaptive immunity. IL-23 may constitute with IL-17 an acute response to infection in peripheral tissues. IL-23 binds to a heterodimeric receptor complex composed of IL12RB1 and IL23R, activates the Jak-Stat signaling cascade, stimulates memory rather than naive T-cells and promotes production of pro-inflammatory cytokines. IL-23 induces autoimmune inflammation and thus may be responsible for autoimmune inflammatory diseases and may be important for tumorigenesis. This Capra hircus (Goat) protein is Interleukin-12 subunit beta (IL12B).